The primary structure comprises 238 residues: MKGRSLNAEDRARLEAAIGYQFAEKERLDRALTHSSARSGRAINYQRLEFLGDRILGLCVAELLFQTFSDANEGELSVRLNQLVSAESCAKVADELSLHEFIRTGSDVKKITGKHMMNVRADVVESLIAAIYLDGGLEAARRFVLEHWTHRAASADGARRDAKTELQEWAHARFGVAPKYRTEDRSGPDHDPRFTVTVEVDGIDPETGVDRSKRGAEQVAAMKLLEREGVWQKRSAGN.

In terms of domain architecture, RNase III spans 11–136 (RARLEAAIGY…LIAAIYLDGG (126 aa)). Glu49 contributes to the Mg(2+) binding site. Asp53 is a catalytic residue. Mg(2+)-binding residues include Asp122 and Glu125. Glu125 is an active-site residue. The DRBM domain maps to 161 to 230 (DAKTELQEWA…AMKLLEREGV (70 aa)). Basic and acidic residues predominate over residues 180–193 (YRTEDRSGPDHDPR). The interval 180–215 (YRTEDRSGPDHDPRFTVTVEVDGIDPETGVDRSKRG) is disordered.

This sequence belongs to the ribonuclease III family. As to quaternary structure, homodimer. Mg(2+) is required as a cofactor.

The protein localises to the cytoplasm. The enzyme catalyses Endonucleolytic cleavage to 5'-phosphomonoester.. Digests double-stranded RNA. Involved in the processing of primary rRNA transcript to yield the immediate precursors to the large and small rRNAs (23S and 16S). Processes some mRNAs, and tRNAs when they are encoded in the rRNA operon. Processes pre-crRNA and tracrRNA of type II CRISPR loci if present in the organism. This is Ribonuclease 3 from Sinorhizobium medicae (strain WSM419) (Ensifer medicae).